Here is a 423-residue protein sequence, read N- to C-terminus: Histidine--tRNA ligase (423 aa).

Belongs to the class-II aminoacyl-tRNA synthetase family. Homodimer.

The protein resides in the cytoplasm. It carries out the reaction tRNA(His) + L-histidine + ATP = L-histidyl-tRNA(His) + AMP + diphosphate + H(+). The polypeptide is Histidine--tRNA ligase (Prochlorococcus marinus (strain MIT 9211)).